The sequence spans 318 residues: MGNGVKEGPVRLHEDAEAVLSSSVSSKRDHRQVLSSLLSGALAGALAKTAVAPLDRTKIIFQVSSKRFSAKEAFRVLYYTYLNEGFLSLWRGNSATMVRVVPYAAIQFSAHEEYKRILGSYYGFRGEALPPWPRLFAGALAGTTAASLTYPLDLVRARMAVTPKEMYSNIFHVFIRISREEGLKTLYHGFMPTVLGVIPYAGLSFFTYETLKSLHREYSGRRQPYPFERMIFGACAGLIGQSASYPLDVVRRRMQTAGVTGYPRASIARTLRTIVREEGAVRGLYKGLSMNWVKGPIAVGISFTTFDLMQILLRHLQS.

Solcar repeat units lie at residues 31–117 (RQVL…YKRI), 129–214 (LPPW…LKSL), and 224–312 (PYPF…MQIL). 6 consecutive transmembrane segments (helical) span residues 33 to 53 (VLSSLLSGALAGALAKTAVAP), 89 to 109 (LWRGNSATMVRVVPYAAIQFS), 135 to 155 (LFAGALAGTTAASLTYPLDLV), 186 to 206 (LYHGFMPTVLGVIPYAGLSFF), 230 to 250 (MIFGACAGLIGQSASYPLDVV), and 293 to 313 (VKGPIAVGISFTTFDLMQILL).

Belongs to the mitochondrial carrier (TC 2.A.29) family.

Its subcellular location is the mitochondrion inner membrane. The catalysed reaction is ADP(out) + CoA(in) = ADP(in) + CoA(out). The enzyme catalyses 3'-dephospho-CoA(in) + ADP(out) = 3'-dephospho-CoA(out) + ADP(in). It catalyses the reaction adenosine 3',5'-bisphosphate(in) + ADP(out) = adenosine 3',5'-bisphosphate(out) + ADP(in). It carries out the reaction AMP(in) + ADP(out) = AMP(out) + ADP(in). The catalysed reaction is dADP(in) + ADP(out) = dADP(out) + ADP(in). The enzyme catalyses ADP(in) + ATP(out) = ADP(out) + ATP(in). Its function is as follows. Mitochondrial carrier mediating the transport of coenzyme A (CoA) in mitochondria in exchange for intramitochondrial (deoxy)adenine nucleotides and adenosine 3',5'-diphosphate. In Homo sapiens (Human), this protein is Mitochondrial coenzyme A transporter SLC25A42 (SLC25A42).